The primary structure comprises 233 residues: Phosphatidylserine decarboxylase proenzyme (233 aa).

The active-site Schiff-base intermediate with substrate; via pyruvic acid is the Ser-190. Ser-190 bears the Pyruvic acid (Ser); by autocatalysis mark.

This sequence belongs to the phosphatidylserine decarboxylase family. PSD-A subfamily. In terms of assembly, heterodimer of a large membrane-associated beta subunit and a small pyruvoyl-containing alpha subunit. Requires pyruvate as cofactor. Post-translationally, is synthesized initially as an inactive proenzyme. Formation of the active enzyme involves a self-maturation process in which the active site pyruvoyl group is generated from an internal serine residue via an autocatalytic post-translational modification. Two non-identical subunits are generated from the proenzyme in this reaction, and the pyruvate is formed at the N-terminus of the alpha chain, which is derived from the carboxyl end of the proenzyme. The post-translation cleavage follows an unusual pathway, termed non-hydrolytic serinolysis, in which the side chain hydroxyl group of the serine supplies its oxygen atom to form the C-terminus of the beta chain, while the remainder of the serine residue undergoes an oxidative deamination to produce ammonia and the pyruvoyl prosthetic group on the alpha chain.

Its subcellular location is the cell membrane. The catalysed reaction is a 1,2-diacyl-sn-glycero-3-phospho-L-serine + H(+) = a 1,2-diacyl-sn-glycero-3-phosphoethanolamine + CO2. It participates in phospholipid metabolism; phosphatidylethanolamine biosynthesis; phosphatidylethanolamine from CDP-diacylglycerol: step 2/2. Catalyzes the formation of phosphatidylethanolamine (PtdEtn) from phosphatidylserine (PtdSer). In Azorhizobium caulinodans (strain ATCC 43989 / DSM 5975 / JCM 20966 / LMG 6465 / NBRC 14845 / NCIMB 13405 / ORS 571), this protein is Phosphatidylserine decarboxylase proenzyme.